The primary structure comprises 271 residues: Dermonecrotic toxin LarSicTox-alphaIB1c (271 aa).

The active site involves His-3. Positions 23 and 25 each coordinate Mg(2+). Catalysis depends on His-39, which acts as the Nucleophile. Disulfide bonds link Cys-43-Cys-49 and Cys-45-Cys-188. Residue Asp-83 coordinates Mg(2+). The N-linked (GlcNAc...) asparagine glycan is linked to Asn-248.

Belongs to the arthropod phospholipase D family. Class II subfamily. Mg(2+) is required as a cofactor. As to expression, expressed by the venom gland.

The protein localises to the secreted. The enzyme catalyses an N-(acyl)-sphingosylphosphocholine = an N-(acyl)-sphingosyl-1,3-cyclic phosphate + choline. It carries out the reaction an N-(acyl)-sphingosylphosphoethanolamine = an N-(acyl)-sphingosyl-1,3-cyclic phosphate + ethanolamine. The catalysed reaction is a 1-acyl-sn-glycero-3-phosphocholine = a 1-acyl-sn-glycero-2,3-cyclic phosphate + choline. It catalyses the reaction a 1-acyl-sn-glycero-3-phosphoethanolamine = a 1-acyl-sn-glycero-2,3-cyclic phosphate + ethanolamine. Functionally, dermonecrotic toxins cleave the phosphodiester linkage between the phosphate and headgroup of certain phospholipids (sphingolipid and lysolipid substrates), forming an alcohol (often choline) and a cyclic phosphate. This toxin acts on sphingomyelin (SM). It may also act on ceramide phosphoethanolamine (CPE), lysophosphatidylcholine (LPC) and lysophosphatidylethanolamine (LPE), but not on lysophosphatidylserine (LPS), and lysophosphatidylglycerol (LPG). It acts by transphosphatidylation, releasing exclusively cyclic phosphate products as second products. Induces dermonecrosis, hemolysis, increased vascular permeability, edema, inflammatory response, and platelet aggregation. The protein is Dermonecrotic toxin LarSicTox-alphaIB1c of Loxosceles arizonica (Arizona brown spider).